A 90-amino-acid chain; its full sequence is Elongation factor 1-beta (90 aa).

Belongs to the EF-1-beta/EF-1-delta family.

Its function is as follows. Promotes the exchange of GDP for GTP in EF-1-alpha/GDP, thus allowing the regeneration of EF-1-alpha/GTP that could then be used to form the ternary complex EF-1-alpha/GTP/AAtRNA. In Staphylothermus marinus (strain ATCC 43588 / DSM 3639 / JCM 9404 / F1), this protein is Elongation factor 1-beta.